The chain runs to 754 residues: 1,4-alpha-glucan branching enzyme GlgB (754 aa).

Aspartate 431 (nucleophile) is an active-site residue. Glutamate 484 acts as the Proton donor in catalysis.

This sequence belongs to the glycosyl hydrolase 13 family. GlgB subfamily. In terms of assembly, monomer.

It catalyses the reaction Transfers a segment of a (1-&gt;4)-alpha-D-glucan chain to a primary hydroxy group in a similar glucan chain.. Its pathway is glycan biosynthesis; glycogen biosynthesis. In terms of biological role, catalyzes the formation of the alpha-1,6-glucosidic linkages in glycogen by scission of a 1,4-alpha-linked oligosaccharide from growing alpha-1,4-glucan chains and the subsequent attachment of the oligosaccharide to the alpha-1,6 position. This Prochlorococcus marinus (strain MIT 9515) protein is 1,4-alpha-glucan branching enzyme GlgB.